The chain runs to 426 residues: Gamma-glutamyl phosphate reductase (426 aa).

This sequence belongs to the gamma-glutamyl phosphate reductase family.

It is found in the cytoplasm. The catalysed reaction is L-glutamate 5-semialdehyde + phosphate + NADP(+) = L-glutamyl 5-phosphate + NADPH + H(+). Its pathway is amino-acid biosynthesis; L-proline biosynthesis; L-glutamate 5-semialdehyde from L-glutamate: step 2/2. In terms of biological role, catalyzes the NADPH-dependent reduction of L-glutamate 5-phosphate into L-glutamate 5-semialdehyde and phosphate. The product spontaneously undergoes cyclization to form 1-pyrroline-5-carboxylate. This chain is Gamma-glutamyl phosphate reductase, found in Ralstonia pickettii (strain 12J).